Here is a 676-residue protein sequence, read N- to C-terminus: UvrABC system protein B (676 aa).

Residues R39–R424 form the Helicase ATP-binding domain. G52–T59 is a binding site for ATP. The Beta-hairpin motif lies at Y105–I128. The Helicase C-terminal domain maps to Q441–I604. The segment at K611–S631 is disordered. A UVR domain is found at E629–Q664.

This sequence belongs to the UvrB family. Forms a heterotetramer with UvrA during the search for lesions. Interacts with UvrC in an incision complex.

The protein resides in the cytoplasm. Its function is as follows. The UvrABC repair system catalyzes the recognition and processing of DNA lesions. A damage recognition complex composed of 2 UvrA and 2 UvrB subunits scans DNA for abnormalities. Upon binding of the UvrA(2)B(2) complex to a putative damaged site, the DNA wraps around one UvrB monomer. DNA wrap is dependent on ATP binding by UvrB and probably causes local melting of the DNA helix, facilitating insertion of UvrB beta-hairpin between the DNA strands. Then UvrB probes one DNA strand for the presence of a lesion. If a lesion is found the UvrA subunits dissociate and the UvrB-DNA preincision complex is formed. This complex is subsequently bound by UvrC and the second UvrB is released. If no lesion is found, the DNA wraps around the other UvrB subunit that will check the other stand for damage. The sequence is that of UvrABC system protein B from Chlamydia muridarum (strain MoPn / Nigg).